The primary structure comprises 107 residues: Sperm-specific class P protein 32 (107 aa).

The tract at residues 1 to 20 (MLTIEPPSATFPASGGSSTH) is disordered. The 107-residue stretch at 1-107 (MLTIEPPSAT…GDVTILLKTN (107 aa)) folds into the MSP domain.

Expressed at higher level in testis.

The polypeptide is Sperm-specific class P protein 32 (ssp-32) (Caenorhabditis elegans).